The primary structure comprises 181 residues: MLSVGQWPNKPFAWLLLFLGCSGLLGAALYFQMVLNLEPCVKCVYQRMAVIGIGLSAIVGLFGSGLWLTRWAALIGWLYSSYQGLLIAYDHWDLQTSKNAFFAVCESAPNFPDWAPMHEWMPGLFAAPGLCGDIDWQWLGLGMPGWMTVIFAGLLLIGIIVTICHIISSFTKKDGLVLYHK.

At Met-1–Ala-13 the chain is on the cytoplasmic side. A helical transmembrane segment spans residues Trp-14–Tyr-30. Residues Phe-31 to Met-48 are Periplasmic-facing. The cysteines at positions 40 and 43 are disulfide-linked. The chain crosses the membrane as a helical span at residues Ala-49 to Ser-64. Over Gly-65–Trp-71 the chain is Cytoplasmic. The chain crosses the membrane as a helical span at residues Ala-72–Tyr-89. The Periplasmic segment spans residues Asp-90–Gly-145. Cys-105 and Cys-131 are oxidised to a cystine. A helical transmembrane segment spans residues Trp-146–Cys-164. Residues His-165 to Lys-181 lie on the Cytoplasmic side of the membrane.

It belongs to the DsbB family.

The protein localises to the cell inner membrane. In terms of biological role, required for disulfide bond formation in some periplasmic proteins. Acts by oxidizing the DsbA protein. The sequence is that of Disulfide bond formation protein B from Idiomarina loihiensis (strain ATCC BAA-735 / DSM 15497 / L2-TR).